Consider the following 189-residue polypeptide: MASKRALVILAKGAEEMETVIPVDVMRRAGIKVTIAGLAGKDPVQCSRDVVICPDASLEDAKKEGPYDVVVLPGGNLGAQNLSESAAVKEILKEQENRKGLIAAICAGPTALLAHEIGFGSKVTTHPLAKDKMMNGGHYTYSENRVEKDGLILTSRGPGTSFEFALAIVEALNGKEVAAQVKAPLVLKD.

Position 2 is an N-acetylalanine (alanine 2). 2 S-palmitoyl cysteine lipidation sites follow: cysteine 46 and cysteine 53. Tyrosine 67 carries the phosphotyrosine modification. Residue cysteine 106 is the Nucleophile of the active site. Cysteine 106 bears the Cysteine sulfinic acid (-SO2H); alternate mark. Cysteine 106 carries the S-palmitoyl cysteine; alternate lipid modification. Histidine 126 is an active-site residue. Lysine 130 participates in a covalent cross-link: Glycyl lysine isopeptide (Lys-Gly) (interchain with G-Cter in SUMO). Position 148 is an N6-acetyllysine (lysine 148). Lysine 182 is modified (N6-succinyllysine).

Belongs to the peptidase C56 family. As to quaternary structure, homodimer. Binds EFCAB6/DJBP and PIAS2. Part of a ternary complex containing PARK7, EFCAB6/DJBP and AR. Interacts (via N-terminus) with OTUD7B. Interacts with BBS1, HIPK1, CLCF1 and MTERF. Forms a complex with PINK1 and PRKN. Interacts (via C-terminus) with NCF1; the interaction is enhanced by LPS and modulates NCF1 phosphorylation and membrane translocation. Interacts with NENF. Deglycase activity does not require glutathione as a cofactor, however, glycated glutathione constitutes a PARK7 substrate. is required as a cofactor. Post-translationally, sumoylated on Lys-130 by PIAS2 or PIAS4; which is essential for cell-growth promoting activity and transforming activity. Undergoes cleavage of a C-terminal peptide and subsequent activation of protease activity in response to oxidative stress.

The protein localises to the cell membrane. It localises to the cytoplasm. It is found in the nucleus. The protein resides in the membrane raft. Its subcellular location is the mitochondrion. The protein localises to the endoplasmic reticulum. The catalysed reaction is N(omega)-(1-hydroxy-2-oxopropyl)-L-arginyl-[protein] + H2O = lactate + L-arginyl-[protein] + H(+). It carries out the reaction N(6)-(1-hydroxy-2-oxopropyl)-L-lysyl-[protein] + H2O = lactate + L-lysyl-[protein] + H(+). The enzyme catalyses S-(1-hydroxy-2-oxopropyl)-L-cysteinyl-[protein] + H2O = lactate + L-cysteinyl-[protein] + H(+). It catalyses the reaction N(omega)-(1-hydroxy-2-oxoethyl)-L-arginyl-[protein] + H2O = L-arginyl-[protein] + glycolate + H(+). The catalysed reaction is N(6)-(1-hydroxy-2-oxoethyl)-L-lysyl-[protein] + H2O = glycolate + L-lysyl-[protein] + H(+). It carries out the reaction S-(1-hydroxy-2-oxoethyl)-L-cysteinyl-[protein] + H2O = glycolate + L-cysteinyl-[protein] + H(+). The enzyme catalyses N(2)-(1-hydroxy-2-oxopropyl)-dGTP + H2O = lactate + dGTP + H(+). It catalyses the reaction N(2)-(1-hydroxy-2-oxopropyl)-GTP + H2O = lactate + GTP + H(+). The catalysed reaction is N(2)-(1-hydroxy-2-oxopropyl)-GDP + H2O = lactate + GDP + H(+). It carries out the reaction N(2)-(1-hydroxy-2-oxopropyl)-GMP + H2O = lactate + GMP + H(+). The enzyme catalyses N(2)-(1-hydroxy-2-oxoethyl)-dGTP + H2O = dGTP + glycolate + H(+). It catalyses the reaction N(2)-(1-hydroxy-2-oxoethyl)-GTP + H2O = glycolate + GTP + H(+). The catalysed reaction is N(2)-(1-hydroxy-2-oxoethyl)-GDP + H2O = glycolate + GDP + H(+). It carries out the reaction N(2)-(1-hydroxy-2-oxoethyl)-GMP + H2O = glycolate + GMP + H(+). The enzyme catalyses an N(2)-(1-hydroxy-2-oxopropyl)-guanosine in RNA + H2O = a guanosine in RNA + lactate + H(+). It catalyses the reaction an N(2)-(1-hydroxy-2-oxopropyl)-2'-deoxyguanosine in DNA + H2O = a 2'-deoxyguanosine in DNA + lactate + H(+). The catalysed reaction is an N(2)-(1-hydroxy-2-oxoethyl)-guanosine in RNA + H2O = a guanosine in RNA + glycolate + H(+). It carries out the reaction an N(2)-(1-hydroxy-2-oxoethyl)-2'-deoxyguanosine in DNA + H2O = a 2'-deoxyguanosine in DNA + glycolate + H(+). In terms of biological role, multifunctional protein with controversial molecular function which plays an important role in cell protection against oxidative stress and cell death acting as oxidative stress sensor and redox-sensitive chaperone and protease. It is involved in neuroprotective mechanisms like the stabilization of NFE2L2 and PINK1 proteins, male fertility as a positive regulator of androgen signaling pathway as well as cell growth and transformation through, for instance, the modulation of NF-kappa-B signaling pathway. Has been described as a protein and nucleotide deglycase that catalyzes the deglycation of the Maillard adducts formed between amino groups of proteins or nucleotides and reactive carbonyl groups of glyoxals. But this function is rebuted by other works. As a protein deglycase, repairs methylglyoxal- and glyoxal-glycated proteins, and releases repaired proteins and lactate or glycolate, respectively. Deglycates cysteine, arginine and lysine residues in proteins, and thus reactivates these proteins by reversing glycation by glyoxals. Acts on early glycation intermediates (hemithioacetals and aminocarbinols), preventing the formation of advanced glycation endproducts (AGE) that cause irreversible damage. Also functions as a nucleotide deglycase able to repair glycated guanine in the free nucleotide pool (GTP, GDP, GMP, dGTP) and in DNA and RNA. Is thus involved in a major nucleotide repair system named guanine glycation repair (GG repair), dedicated to reversing methylglyoxal and glyoxal damage via nucleotide sanitization and direct nucleic acid repair. Protects histones from adduction by methylglyoxal, controls the levels of methylglyoxal-derived argininine modifications on chromatin. Able to remove the glycations and restore histone 3, histone glycation disrupts both local and global chromatin architecture by altering histone-DNA interactions as well as histone acetylation and ubiquitination levels. Displays a very low glyoxalase activity that may reflect its deglycase activity. Eliminates hydrogen peroxide and protects cells against hydrogen peroxide-induced cell death. Required for correct mitochondrial morphology and function as well as for autophagy of dysfunctional mitochondria. Plays a role in regulating expression or stability of the mitochondrial uncoupling proteins SLC25A14 and SLC25A27 in dopaminergic neurons of the substantia nigra pars compacta and attenuates the oxidative stress induced by calcium entry into the neurons via L-type channels during pacemaking. Regulates astrocyte inflammatory responses, may modulate lipid rafts-dependent endocytosis in astrocytes and neuronal cells. In pancreatic islets, involved in the maintenance of mitochondrial reactive oxygen species (ROS) levels and glucose homeostasis in an age- and diet dependent manner. Protects pancreatic beta cells from cell death induced by inflammatory and cytotoxic setting. Binds to a number of mRNAs containing multiple copies of GG or CC motifs and partially inhibits their translation but dissociates following oxidative stress. Metal-binding protein able to bind copper as well as toxic mercury ions, enhances the cell protection mechanism against induced metal toxicity. In macrophages, interacts with the NADPH oxidase subunit NCF1 to direct NADPH oxidase-dependent ROS production, and protects against sepsis. The sequence is that of Parkinson disease protein 7 homolog from Chlorocebus aethiops (Green monkey).